Here is a 204-residue protein sequence, read N- to C-terminus: Urease accessory protein UreG (204 aa).

11 to 18 serves as a coordination point for GTP; sequence GPVGAGKT.

Belongs to the SIMIBI class G3E GTPase family. UreG subfamily. Homodimer. UreD, UreF and UreG form a complex that acts as a GTP-hydrolysis-dependent molecular chaperone, activating the urease apoprotein by helping to assemble the nickel containing metallocenter of UreC. The UreE protein probably delivers the nickel.

It localises to the cytoplasm. In terms of biological role, facilitates the functional incorporation of the urease nickel metallocenter. This process requires GTP hydrolysis, probably effectuated by UreG. The polypeptide is Urease accessory protein UreG (Staphylococcus aureus (strain MSSA476)).